Here is a 185-residue protein sequence, read N- to C-terminus: UPF0397 protein AYWB_013 (185 aa).

5 helical membrane-spanning segments follow: residues 13-33 (IGLSTTIFFVLSCFASIPVGF), 42-62 (AFLAFIAVAFGPSVGFYVGLI), 69-89 (FFLFGNVSWNWVLCSALIGFI), 109-129 (IVYFWLYQVACNFIIWGFFAP), and 148-168 (FLIVISNILAYSVVGIKLMTI).

Belongs to the UPF0397 family.

It localises to the cell membrane. The chain is UPF0397 protein AYWB_013 from Aster yellows witches'-broom phytoplasma (strain AYWB).